The sequence spans 226 residues: Orotate phosphoribosyltransferase (226 aa).

5-phospho-alpha-D-ribose 1-diphosphate contacts are provided by residues arginine 107, lysine 108, lysine 111, and 133-141 (EDLTTDGGS). Threonine 137 is an orotate binding site.

Belongs to the purine/pyrimidine phosphoribosyltransferase family. PyrE subfamily. Homodimer. It depends on Mg(2+) as a cofactor.

The catalysed reaction is orotidine 5'-phosphate + diphosphate = orotate + 5-phospho-alpha-D-ribose 1-diphosphate. Its pathway is pyrimidine metabolism; UMP biosynthesis via de novo pathway; UMP from orotate: step 1/2. Its function is as follows. Catalyzes the transfer of a ribosyl phosphate group from 5-phosphoribose 1-diphosphate to orotate, leading to the formation of orotidine monophosphate (OMP). The chain is Orotate phosphoribosyltransferase from Ruegeria sp. (strain TM1040) (Silicibacter sp.).